A 189-amino-acid polypeptide reads, in one-letter code: Dual specificity phosphatase 29 (189 aa).

One can recognise a Tyrosine-protein phosphatase domain in the interval 33–182 (HVNEVWPGVY…LRELDTHLQE (150 aa)). 126 to 133 (HCVMGRSR) lines the substrate pocket. C127 (phosphocysteine intermediate) is an active-site residue.

This sequence belongs to the protein-tyrosine phosphatase family. Non-receptor class dual specificity subfamily.

The protein localises to the cytoplasm. The protein resides in the nucleus. The catalysed reaction is O-phospho-L-tyrosyl-[protein] + H2O = L-tyrosyl-[protein] + phosphate. It carries out the reaction O-phospho-L-seryl-[protein] + H2O = L-seryl-[protein] + phosphate. The enzyme catalyses O-phospho-L-threonyl-[protein] + H2O = L-threonyl-[protein] + phosphate. In terms of biological role, dual specificity phosphatase able to dephosphorylate phosphotyrosine, phosphoserine and phosphothreonine residues within the same substrate, with a preference for phosphotyrosine as a substrate. Involved in the modulation of AMPK and MAPK1/2 signaling pathways. This Danio rerio (Zebrafish) protein is Dual specificity phosphatase 29 (dusp29).